A 214-amino-acid polypeptide reads, in one-letter code: MSSSHRKLSGRIVIATHNPGKLAEMRELLAPYGVEAVSAGELSLGEPDETGETFQANARIKAVAAADAAQLPAFADDSGIVVHALDGAPGIYSARWAGPDKDFTAAMTRIERLLQERGATGPDKRGAHFVSALCVAWPDGHVEEVEARVDGTLVWPPRGSAGFGYDPMFLPEGHDRTFGEMTSLEKHGLPPLGLGLSHRARAFVKLAEICLDQR.

A substrate-binding site is contributed by 16-21 (THNPGK). Positions 48 and 77 each coordinate Mg(2+). Asp77 (proton acceptor) is an active-site residue. Substrate-binding positions include Ser78, 163–166 (FGYD), Lys186, and 198–199 (HR).

It belongs to the HAM1 NTPase family. In terms of assembly, homodimer. Mg(2+) serves as cofactor.

The enzyme catalyses XTP + H2O = XMP + diphosphate + H(+). It catalyses the reaction dITP + H2O = dIMP + diphosphate + H(+). The catalysed reaction is ITP + H2O = IMP + diphosphate + H(+). In terms of biological role, pyrophosphatase that catalyzes the hydrolysis of nucleoside triphosphates to their monophosphate derivatives, with a high preference for the non-canonical purine nucleotides XTP (xanthosine triphosphate), dITP (deoxyinosine triphosphate) and ITP. Seems to function as a house-cleaning enzyme that removes non-canonical purine nucleotides from the nucleotide pool, thus preventing their incorporation into DNA/RNA and avoiding chromosomal lesions. In Bradyrhizobium sp. (strain BTAi1 / ATCC BAA-1182), this protein is dITP/XTP pyrophosphatase.